Here is a 208-residue protein sequence, read N- to C-terminus: 2-phospho-L-lactate guanylyltransferase (208 aa).

Belongs to the CofC family. Homodimer.

It carries out the reaction (2S)-2-phospholactate + GTP + H(+) = (2S)-lactyl-2-diphospho-5'-guanosine + diphosphate. The protein operates within cofactor biosynthesis; coenzyme F420 biosynthesis. In terms of biological role, guanylyltransferase that catalyzes the activation of (2S)-2-phospholactate (2-PL) as (2S)-lactyl-2-diphospho-5'-guanosine, via the condensation of 2-PL with GTP. It is involved in the biosynthesis of coenzyme F420, a hydride carrier cofactor. This chain is 2-phospho-L-lactate guanylyltransferase, found in Haloarcula marismortui (strain ATCC 43049 / DSM 3752 / JCM 8966 / VKM B-1809) (Halobacterium marismortui).